A 451-amino-acid polypeptide reads, in one-letter code: Phosphoglucosamine mutase (451 aa).

Catalysis depends on S101, which acts as the Phosphoserine intermediate. Residues S101, D242, D244, and D246 each contribute to the Mg(2+) site. Residue S101 is modified to Phosphoserine.

It belongs to the phosphohexose mutase family. Mg(2+) is required as a cofactor. Activated by phosphorylation.

It carries out the reaction alpha-D-glucosamine 1-phosphate = D-glucosamine 6-phosphate. In terms of biological role, catalyzes the conversion of glucosamine-6-phosphate to glucosamine-1-phosphate. In Beijerinckia indica subsp. indica (strain ATCC 9039 / DSM 1715 / NCIMB 8712), this protein is Phosphoglucosamine mutase.